Here is a 340-residue protein sequence, read N- to C-terminus: Phosphoribosylformylglycinamidine cyclo-ligase (340 aa).

This sequence belongs to the AIR synthase family.

The protein localises to the cytoplasm. The catalysed reaction is 2-formamido-N(1)-(5-O-phospho-beta-D-ribosyl)acetamidine + ATP = 5-amino-1-(5-phospho-beta-D-ribosyl)imidazole + ADP + phosphate + H(+). It participates in purine metabolism; IMP biosynthesis via de novo pathway; 5-amino-1-(5-phospho-D-ribosyl)imidazole from N(2)-formyl-N(1)-(5-phospho-D-ribosyl)glycinamide: step 2/2. This is Phosphoribosylformylglycinamidine cyclo-ligase from Streptococcus pyogenes serotype M12 (strain MGAS2096).